The following is a 94-amino-acid chain: Trp operon repressor homolog (94 aa).

Residues 58-81 (QREIAEKYGVSIAQITRGSNALKG) mediate DNA binding.

This sequence belongs to the TrpR family. As to quaternary structure, homodimer.

The protein localises to the cytoplasm. Its function is as follows. This protein is an aporepressor. When complexed with L-tryptophan it binds the operator region of the trp operon and prevents the initiation of transcription. The sequence is that of Trp operon repressor homolog from Chlamydia trachomatis serovar A (strain ATCC VR-571B / DSM 19440 / HAR-13).